A 284-amino-acid polypeptide reads, in one-letter code: 2-dehydro-3-deoxyphosphooctonate aldolase (284 aa).

It belongs to the KdsA family.

It localises to the cytoplasm. The enzyme catalyses D-arabinose 5-phosphate + phosphoenolpyruvate + H2O = 3-deoxy-alpha-D-manno-2-octulosonate-8-phosphate + phosphate. The protein operates within carbohydrate biosynthesis; 3-deoxy-D-manno-octulosonate biosynthesis; 3-deoxy-D-manno-octulosonate from D-ribulose 5-phosphate: step 2/3. Its pathway is bacterial outer membrane biogenesis; lipopolysaccharide biosynthesis. This chain is 2-dehydro-3-deoxyphosphooctonate aldolase, found in Klebsiella pneumoniae subsp. pneumoniae (strain ATCC 700721 / MGH 78578).